A 99-amino-acid chain; its full sequence is NADH-quinone oxidoreductase subunit K (99 aa).

The next 3 membrane-spanning stretches (helical) occupy residues 3–23, 28–48, and 59–79; these read PANYLYLSVLLFTIGASGVLL, IVMFMCVELMLNAVNLAFVTF, and MIAFFTMVVAACEVVVGLAII.

Belongs to the complex I subunit 4L family. NDH-1 is composed of 14 different subunits. Subunits NuoA, H, J, K, L, M, N constitute the membrane sector of the complex.

The protein localises to the cell membrane. The catalysed reaction is a quinone + NADH + 5 H(+)(in) = a quinol + NAD(+) + 4 H(+)(out). Functionally, NDH-1 shuttles electrons from NADH, via FMN and iron-sulfur (Fe-S) centers, to quinones in the respiratory chain. The immediate electron acceptor for the enzyme in this species is believed to be a menaquinone. Couples the redox reaction to proton translocation (for every two electrons transferred, four hydrogen ions are translocated across the cytoplasmic membrane), and thus conserves the redox energy in a proton gradient. The protein is NADH-quinone oxidoreductase subunit K of Mycobacterium bovis (strain ATCC BAA-935 / AF2122/97).